A 435-amino-acid chain; its full sequence is Adenylosuccinate synthetase (435 aa).

GTP is bound by residues 12 to 18 (GDEGKGK) and 40 to 42 (GHT). The Proton acceptor role is filled by Asp13. Mg(2+) contacts are provided by Asp13 and Gly40. IMP contacts are provided by residues 13-16 (DEGK), 38-41 (NAGH), Thr130, Arg144, Gln224, Thr239, and Arg301. Residue His41 is the Proton donor of the active site. 297 to 303 (TVSNRKR) contacts substrate. Residues Arg303, 329–331 (KLD), and 411–413 (SAG) each bind GTP.

It belongs to the adenylosuccinate synthetase family. Homodimer. Mg(2+) serves as cofactor.

It is found in the cytoplasm. The catalysed reaction is IMP + L-aspartate + GTP = N(6)-(1,2-dicarboxyethyl)-AMP + GDP + phosphate + 2 H(+). The protein operates within purine metabolism; AMP biosynthesis via de novo pathway; AMP from IMP: step 1/2. In terms of biological role, plays an important role in the de novo pathway of purine nucleotide biosynthesis. Catalyzes the first committed step in the biosynthesis of AMP from IMP. This Wolbachia sp. subsp. Brugia malayi (strain TRS) protein is Adenylosuccinate synthetase.